Here is a 253-residue protein sequence, read N- to C-terminus: MKYIEVDEELYRFIASKTERIGESASDILRRLLTLPVDTVTPFEPNAIDEPSLDVAHHQASNFAASNQEQQTGHGHAGEPSAVQTPESNDYAKAQPHSSGYQPGQLEGHKSEPQTLAQLNSQPLAVGQSSQSATSQVDFNALVNEHLLSQQKGAVGRFMWLLEGLAALAPSQFNKVLLVQGKGRLYFARSKDELLASSASANPKEIGTTGYWVTTNNNTAKKQAILVEVLTKLHCDETLASAIADRICDKVAG.

The interval 66 to 112 (SNQEQQTGHGHAGEPSAVQTPESNDYAKAQPHSSGYQPGQLEGHKSE) is disordered. The interval 154–155 (AV) is interaction with DNA.

The protein belongs to the SeqA family. In terms of assembly, homodimer. Polymerizes to form helical filaments.

The protein resides in the cytoplasm. Functionally, negative regulator of replication initiation, which contributes to regulation of DNA replication and ensures that replication initiation occurs exactly once per chromosome per cell cycle. Binds to pairs of hemimethylated GATC sequences in the oriC region, thus preventing assembly of replication proteins and re-initiation at newly replicated origins. Repression is relieved when the region becomes fully methylated. This chain is Negative modulator of initiation of replication, found in Shewanella denitrificans (strain OS217 / ATCC BAA-1090 / DSM 15013).